The chain runs to 401 residues: 8-amino-7-oxononanoate synthase (401 aa).

Arg24 serves as a coordination point for substrate. 111–112 lines the pyridoxal 5'-phosphate pocket; it reads GF. Residue His137 participates in substrate binding. Pyridoxal 5'-phosphate is bound by residues Ser183, His211, and Thr240. Residue Lys243 is modified to N6-(pyridoxal phosphate)lysine. Thr357 contributes to the substrate binding site.

Belongs to the class-II pyridoxal-phosphate-dependent aminotransferase family. BioF subfamily. In terms of assembly, homodimer. The cofactor is pyridoxal 5'-phosphate.

The catalysed reaction is 6-carboxyhexanoyl-[ACP] + L-alanine + H(+) = (8S)-8-amino-7-oxononanoate + holo-[ACP] + CO2. Its pathway is cofactor biosynthesis; biotin biosynthesis. In terms of biological role, catalyzes the decarboxylative condensation of pimeloyl-[acyl-carrier protein] and L-alanine to produce 8-amino-7-oxononanoate (AON), [acyl-carrier protein], and carbon dioxide. In Xylella fastidiosa (strain M23), this protein is 8-amino-7-oxononanoate synthase.